The sequence spans 174 residues: MNQILFIVGARGAGKTTVGKLLANELSYTFIDTDHHIQQTSNMTIADIVNQQGWQQFRQLESQALQQVTQINRVISTGGGIILSAENRQYMRQNGTVIYLQASASILAERLMQQPESTQRPSLTGKSIVEEMEEVLAARENLYCECANHIINAHLSPEKITTYVKEIMFSGIVS.

Glycine 12–threonine 17 lines the ATP pocket. Mg(2+) is bound by residues threonine 16 and aspartate 32. Residues aspartate 34, arginine 58, and glycine 79 each contribute to the substrate site. The LID domain stretch occupies residues methionine 112–lysine 126. Arginine 120 provides a ligand contact to ATP. Position 139 (arginine 139) interacts with substrate.

Belongs to the shikimate kinase family. AroL subfamily. As to quaternary structure, monomer. Mg(2+) serves as cofactor.

It localises to the cytoplasm. It catalyses the reaction shikimate + ATP = 3-phosphoshikimate + ADP + H(+). The protein operates within metabolic intermediate biosynthesis; chorismate biosynthesis; chorismate from D-erythrose 4-phosphate and phosphoenolpyruvate: step 5/7. In terms of biological role, catalyzes the specific phosphorylation of the 3-hydroxyl group of shikimic acid using ATP as a cosubstrate. The sequence is that of Shikimate kinase 2 from Photorhabdus laumondii subsp. laumondii (strain DSM 15139 / CIP 105565 / TT01) (Photorhabdus luminescens subsp. laumondii).